We begin with the raw amino-acid sequence, 147 residues long: NADH-quinone oxidoreductase subunit A (147 aa).

3 helical membrane passes run 16-36 (FAIFLIVAIGLCCLMLVGGWF), 68-88 (FYLVAMFFVIFDVEALYLFAW), and 97-117 (WVGFVEAAIFIFVLLAGLVYL).

It belongs to the complex I subunit 3 family. As to quaternary structure, NDH-1 is composed of 13 different subunits. Subunits NuoA, H, J, K, L, M, N constitute the membrane sector of the complex.

It localises to the cell inner membrane. The enzyme catalyses a quinone + NADH + 5 H(+)(in) = a quinol + NAD(+) + 4 H(+)(out). Functionally, NDH-1 shuttles electrons from NADH, via FMN and iron-sulfur (Fe-S) centers, to quinones in the respiratory chain. The immediate electron acceptor for the enzyme in this species is believed to be ubiquinone. Couples the redox reaction to proton translocation (for every two electrons transferred, four hydrogen ions are translocated across the cytoplasmic membrane), and thus conserves the redox energy in a proton gradient. The chain is NADH-quinone oxidoreductase subunit A from Salmonella paratyphi A (strain ATCC 9150 / SARB42).